The primary structure comprises 678 residues: ERAD-associated E3 ubiquitin-protein ligase component HRD3A (678 aa).

The N-terminal stretch at 1-25 (MRILSYGIVILSLLVFSFIEFGVHA) is a signal peptide. The interval 40–71 (GGDDNGVGESSDFDEFGESEPKSEEELDPGSW) is disordered. Sel1-like repeat units lie at residues 124 to 159 (PHAQ…AGGN), 242 to 277 (ANAM…VDKG), 279 to 313 (PRSM…AKEG), 317 to 349 (AFNG…AVDN), 353 to 386 (SGHY…ANAG), 388 to 422 (PKAF…AERG), 506 to 537 (AALL…AKSQ), and 540 to 568 (AQAM…RYYD). 2 N-linked (GlcNAc...) asparagine glycosylation sites follow: N298 and N335. Residues 620 to 640 (VVFEEGNATILTLFVCLITIL) form a helical membrane-spanning segment.

It belongs to the sel-1 family. Interacts with OS9.

It is found in the endoplasmic reticulum membrane. Component of the endoplasmic reticulum (ER) quality control system called ER-associated degradation (ERAD) and involved in ubiquitin-dependent degradation of misfolded endoplasmic reticulum proteins. Functions as an ERAD substrate-recruiting factor that recognizes misfolded proteins for the HRD1 E3 ubiquitin ligase complex. Targets the misfolded LRR receptor kinase BRI1. The polypeptide is ERAD-associated E3 ubiquitin-protein ligase component HRD3A (Arabidopsis thaliana (Mouse-ear cress)).